The primary structure comprises 889 residues: Alanine--tRNA ligase (889 aa).

Residues histidine 569, histidine 573, cysteine 671, and histidine 675 each contribute to the Zn(2+) site.

It belongs to the class-II aminoacyl-tRNA synthetase family. Zn(2+) is required as a cofactor.

Its subcellular location is the cytoplasm. It catalyses the reaction tRNA(Ala) + L-alanine + ATP = L-alanyl-tRNA(Ala) + AMP + diphosphate. Catalyzes the attachment of alanine to tRNA(Ala) in a two-step reaction: alanine is first activated by ATP to form Ala-AMP and then transferred to the acceptor end of tRNA(Ala). Also edits incorrectly charged Ser-tRNA(Ala) and Gly-tRNA(Ala) via its editing domain. The polypeptide is Alanine--tRNA ligase (Parasynechococcus marenigrum (strain WH8102)).